The primary structure comprises 493 residues: Geraniol 8-hydroxylase (493 aa).

The Lumenal segment spans residues 1-6 (MDYLTI). A helical membrane pass occupies residues 7-23 (ILTLLFALTLYEAFSYL). Topologically, residues 24–493 (SRRTKNLPPG…HPLRAVPSTL (470 aa)) are cytoplasmic. A heme-binding site is contributed by cysteine 436.

The protein belongs to the cytochrome P450 family. Heme serves as cofactor. In terms of tissue distribution, expressed in roots, stems, leaves and flower buds. Hardly detected in mature flowers and fruits. Expressed in the internal phloem-associated parenchyma.

The protein localises to the endoplasmic reticulum membrane. The enzyme catalyses (2E)-geraniol + reduced [NADPH--hemoprotein reductase] + O2 = (6E)-8-hydroxygeraniol + oxidized [NADPH--hemoprotein reductase] + H2O + H(+). Its function is as follows. Hydroxylase involved in the biosynthesis of hydroxygeraniol, a precursor of the terpenoid indole alkaloids such as vinblastine and vincristine. Also able to hydroxylate in vitro nerol and to catalyze 3'-hydroxylation of the flavanone naringenin to form eriodictyol. No activity with apigenin, kaempferol, p-coumaric acid and ferulic acid as substrates. The polypeptide is Geraniol 8-hydroxylase (CYP76B6) (Catharanthus roseus (Madagascar periwinkle)).